Reading from the N-terminus, the 306-residue chain is MVKVAFIGVGRVGQTIAYNTIVNGYADEVMLYDVVPELPEKFEHEIRHALAALRVKTELLSTNNIDDISGADIVVITAGKPRKPGMSRRDLFIDNAKIMIDLAKKLPKKNKGAMYIMVANPVDMMASVFMKYSGENTISTGNQVETMRMRSYIAKKLNIPAYEVGGYVGGEHGEAAMVLWSTVTVKGKPFSESLGVNKAEVEDYVKKIAAEIIRVLGGTTWGPGADIEEVIRSVALNEGKVMSVAFPHKYEDEIIHISEPVVVGRTVGPALTSALDENDKARLSQAIKEVYNVYKSNLKELEQVIS.

NAD(+) is bound by residues 8-13 (GVGRVG) and Asp-33. Substrate is bound by residues Arg-82 and Arg-88. NAD(+)-binding positions include Asn-95 and 118 to 120 (VAN). Asn-120 and Arg-148 together coordinate substrate. His-172 (proton acceptor) is an active-site residue.

The protein belongs to the LDH/MDH superfamily.

It carries out the reaction (S)-malate + NAD(+) = oxaloacetate + NADH + H(+). Its function is as follows. Catalyzes the reversible oxidation of malate to oxaloacetate. This is Malate dehydrogenase (mdh) from Sulfolobus acidocaldarius (strain ATCC 33909 / DSM 639 / JCM 8929 / NBRC 15157 / NCIMB 11770).